The chain runs to 155 residues: Ribosome-binding factor A (155 aa).

Belongs to the RbfA family. As to quaternary structure, monomer. Binds 30S ribosomal subunits, but not 50S ribosomal subunits or 70S ribosomes.

It is found in the cytoplasm. Functionally, one of several proteins that assist in the late maturation steps of the functional core of the 30S ribosomal subunit. Associates with free 30S ribosomal subunits (but not with 30S subunits that are part of 70S ribosomes or polysomes). Required for efficient processing of 16S rRNA. May interact with the 5'-terminal helix region of 16S rRNA. The protein is Ribosome-binding factor A of Methylocella silvestris (strain DSM 15510 / CIP 108128 / LMG 27833 / NCIMB 13906 / BL2).